The primary structure comprises 118 residues: Na(+)/H(+) antiporter subunit G1 (118 aa).

The next 3 membrane-spanning stretches (helical) occupy residues 4-24 (IILISLALIFVIIGALISALA), 38-58 (AHAAGKASTLGAMSLLFGTFL), and 60-80 (FIATQGFVNMQLIVAIIFVLI).

This sequence belongs to the CPA3 antiporters (TC 2.A.63) subunit G family. As to quaternary structure, may form a heterooligomeric complex that consists of seven subunits: mnhA1, mnhB1, mnhC1, mnhD1, mnhE1, mnhF1 and mnhG1.

Its subcellular location is the cell membrane. In terms of biological role, mnh complex is a Na(+)/H(+) antiporter involved in Na(+) excretion. In Staphylococcus aureus (strain Mu3 / ATCC 700698), this protein is Na(+)/H(+) antiporter subunit G1 (mnhG1).